The primary structure comprises 49 residues: MTPKKRKSKSKKNLRKTNWKKKASKQAIKALAVAKHVLASYNTAEATTN.

A disordered region spans residues 1-23; it reads MTPKKRKSKSKKNLRKTNWKKKA.

Belongs to the bacterial ribosomal protein bL32 family.

The protein resides in the plastid. Its subcellular location is the chloroplast. This Oltmannsiellopsis viridis (Marine flagellate) protein is Large ribosomal subunit protein bL32c.